Here is a 975-residue protein sequence, read N- to C-terminus: Ubiquitin C-terminal hydrolase 15 (975 aa).

Positions 88, 91, 99, 102, 108, 112, 121, and 125 each coordinate Zn(2+). Residues 88-125 (CATCHGPAKTRCSRCKSVRYCSGKCQIIHWRQGHKQTC) form an MYND-type zinc finger. A disordered region spans residues 301–378 (EGPYASAAES…STKTAVSTNS (78 aa)). Positions 309–322 (ESLQRSNSSGNVTG) are enriched in polar residues. Over residues 354 to 369 (YDGHEKNPHNKNEQRS) the composition is skewed to basic and acidic residues. Positions 441 to 747 (RGLFNCGNSC…GAYMLFYMRS (307 aa)) constitute a USP domain. Cys450 functions as the Nucleophile in the catalytic mechanism. The Proton acceptor role is filled by His706. Residues 764–783 (PTCSKRHSSKSSKGSKQDLN) are disordered.

This sequence belongs to the peptidase C19 family. Highly expressed in young panicles. Expressed in roots, leaf blades, leaf sheaths and stems. Expressed at low levels in brown grains.

Its subcellular location is the cytoplasm. It localises to the nucleus. It carries out the reaction Thiol-dependent hydrolysis of ester, thioester, amide, peptide and isopeptide bonds formed by the C-terminal Gly of ubiquitin (a 76-residue protein attached to proteins as an intracellular targeting signal).. Its function is as follows. Recognizes and hydrolyzes the peptide bond at the C-terminal Gly of ubiquitin. Involved in the processing of poly-ubiquitin precursors as well as that of ubiquitinated proteins. Involved in the regulation of grain size. Acts as positive regulator of grain width and size by influencing cell proliferation. Functions partially antagonistically with GW2 in the regulation of grain width. Possesses deubiquitinating enzyme activity in vitro. The sequence is that of Ubiquitin C-terminal hydrolase 15 from Oryza sativa subsp. japonica (Rice).